The sequence spans 160 residues: Cytochrome b6-f complex subunit 4 (160 aa).

Helical transmembrane passes span 36–56, 95–115, and 131–151; these read LLYI…GLSV, LLGV…PFIE, and TVFL…TFPI.

This sequence belongs to the cytochrome b family. PetD subfamily. In terms of assembly, the 4 large subunits of the cytochrome b6-f complex are cytochrome b6, subunit IV (17 kDa polypeptide, petD), cytochrome f and the Rieske protein, while the 4 small subunits are petG, petL, petM and petN. The complex functions as a dimer.

Its subcellular location is the plastid. The protein localises to the chloroplast thylakoid membrane. In terms of biological role, component of the cytochrome b6-f complex, which mediates electron transfer between photosystem II (PSII) and photosystem I (PSI), cyclic electron flow around PSI, and state transitions. The protein is Cytochrome b6-f complex subunit 4 of Stigeoclonium helveticum (Green alga).